The following is a 502-amino-acid chain: Medium/long-chain-fatty-acid--CoA ligase FadD17 (502 aa).

Belongs to the ATP-dependent AMP-binding enzyme family.

The enzyme catalyses a medium-chain fatty acid + ATP + CoA = a medium-chain fatty acyl-CoA + AMP + diphosphate. The catalysed reaction is a long-chain fatty acid + ATP + CoA = a long-chain fatty acyl-CoA + AMP + diphosphate. It participates in lipid metabolism; fatty acid biosynthesis. Its function is as follows. Catalyzes the activation of medium/long-chain fatty acids as acyl-coenzyme A (acyl-CoA), which are then transferred to the multifunctional polyketide synthase (PKS) type III for further chain extension. The sequence is that of Medium/long-chain-fatty-acid--CoA ligase FadD17 (fadD17) from Mycobacterium bovis (strain ATCC BAA-935 / AF2122/97).